Reading from the N-terminus, the 240-residue chain is tRNA pseudouridine synthase A (240 aa).

The active-site Nucleophile is the aspartate 52. Residue tyrosine 110 coordinates substrate.

The protein belongs to the tRNA pseudouridine synthase TruA family. As to quaternary structure, homodimer.

It catalyses the reaction uridine(38/39/40) in tRNA = pseudouridine(38/39/40) in tRNA. Formation of pseudouridine at positions 38, 39 and 40 in the anticodon stem and loop of transfer RNAs. The chain is tRNA pseudouridine synthase A from Solibacter usitatus (strain Ellin6076).